The sequence spans 84 residues: uncharacterized protein (84 aa).

This is an uncharacterized protein from Azorhizobium caulinodans (strain ATCC 43989 / DSM 5975 / JCM 20966 / LMG 6465 / NBRC 14845 / NCIMB 13405 / ORS 571).